The sequence spans 239 residues: Ribosomal RNA small subunit methyltransferase G (239 aa).

Residues glycine 77, phenylalanine 82, 128-129, and arginine 147 contribute to the S-adenosyl-L-methionine site; that span reads AE.

Belongs to the methyltransferase superfamily. RNA methyltransferase RsmG family.

It localises to the cytoplasm. Its function is as follows. Specifically methylates the N7 position of guanine in position 535 of 16S rRNA. In Bacillus mycoides (strain KBAB4) (Bacillus weihenstephanensis), this protein is Ribosomal RNA small subunit methyltransferase G.